The sequence spans 165 residues: Choriogonadotropin subunit beta 7 (165 aa).

Positions 1 to 20 (MEMFQGLLLLLLLSMGGTWA) are cleaved as a signal peptide. 6 disulfide bridges follow: cysteine 29–cysteine 77, cysteine 43–cysteine 92, cysteine 46–cysteine 130, cysteine 54–cysteine 108, cysteine 58–cysteine 110, and cysteine 113–cysteine 120. Asparagine 33 and asparagine 50 each carry an N-linked (GlcNAc...) asparagine glycan. The disordered stretch occupies residues 131-165 (DDPRFQASSSSKAPPPSLPSPSRLPGPSDTPILPQ). Serine 141, serine 147, serine 152, and serine 158 each carry an O-linked (GalNAc...) serine glycan. Over residues 143-154 (APPPSLPSPSRL) the composition is skewed to pro residues.

The protein belongs to the glycoprotein hormones subunit beta family. In terms of assembly, heterodimer of a common alpha chain identical in LH, FSH, TSH and HCG and a unique beta chain distinct in each of the hormones and confers receptor and biological specificity. In terms of tissue distribution, high expression in the placenta throughout pregnancy.

It localises to the secreted. Functionally, beta subunit of the human chorionic gonadotropin (hCG). hCG is a complex glycoprotein composed of two glycosylated subunits alpha and beta which are non-covalently associated. The alpha subunit is identical to those in the pituitary gonadotropin hormones (LH, FSH and TSH). The beta subunits are distinct in each of the hormones and confer receptor and biological specificity. Has an essential role for pregnancy and maternal adaptation. Stimulates the ovaries to synthesize the steroids that are essential for the maintenance of pregnancy. In Homo sapiens (Human), this protein is Choriogonadotropin subunit beta 7.